The sequence spans 462 residues: HEPACAM family member 2 (462 aa).

Positions 1 to 31 are cleaved as a signal peptide; it reads MGQDAFMEPFGDTLGVFQCKIYLLLFGACSG. 3 N-linked (GlcNAc...) asparagine glycosylation sites follow: asparagine 85, asparagine 129, and asparagine 165. 2 consecutive Ig-like C2-type domains span residues 149–233 and 235–331; these read PVVQ…SDII and PIIY…THFT. 2 disulfides stabilise this stretch: cysteine 170–cysteine 219 and cysteine 270–cysteine 315. An N-linked (GlcNAc...) asparagine glycan is attached at asparagine 320. Residues 352–372 form a helical membrane-spanning segment; that stretch reads LASITGISLFLIISMCLLFLW. Topologically, residues 373 to 462 are cytoplasmic; sequence KKYQPYKVIK…IPAQQQDHPE (90 aa).

In terms of processing, poly-ADP-ribosylated (PARsylated) by tankyrase TNKS during late G2 and prophase, leading to translocation to mitotic centrosomes. Post-translationally, N-glycosylated. Widely expressed.

It localises to the golgi apparatus membrane. The protein resides in the cytoplasm. It is found in the cytoskeleton. Its subcellular location is the spindle. The protein localises to the microtubule organizing center. It localises to the centrosome. The protein resides in the midbody. Functionally, required during prometaphase for centrosome maturation. Following poly-ADP-ribosylation (PARsylation) by TNKS, translocates from the Golgi apparatus to mitotic centrosomes and plays a key role in the formation of robust microtubules for prompt movement of chromosomes: anchors AKAP9/CG-NAP, a scaffold protein of the gamma-tubulin ring complex and promotes centrosome maturation. This is HEPACAM family member 2 (HEPACAM2) from Homo sapiens (Human).